Consider the following 234-residue polypeptide: RNA chaperone ProQ (234 aa).

Positions 104–130 (LEEAKARVQAQRDARKREAAENGEKRE) are enriched in basic and acidic residues. The segment at 104-186 (LEEAKARVQA…QRSTPVTSLE (83 aa)) is disordered. Basic residues predominate over residues 131 to 142 (PRRPRPAGKKPT). 2 stretches are compositionally biased toward basic and acidic residues: residues 143–156 (ARRDGEQGSKEVRK) and 163–176 (TSERKPRAKSETTE). Residues 177-186 (QRSTPVTSLE) are compositionally biased toward polar residues.

The protein belongs to the ProQ family.

The protein localises to the cytoplasm. RNA chaperone with significant RNA binding, RNA strand exchange and RNA duplexing activities. May regulate ProP activity through an RNA-based, post-transcriptional mechanism. This is RNA chaperone ProQ from Edwardsiella ictaluri (strain 93-146).